Reading from the N-terminus, the 1171-residue chain is DNA polymerase catalytic subunit (1171 aa).

3 disordered regions span residues 647–687 (GTPA…PFRT), 704–735 (PGGG…EPAP), and 1149–1171 (VEEE…DSSR). Positions 649–662 (PARPPETPARPPET) are enriched in pro residues. Composition is skewed to low complexity over residues 663–674 (PAAGPSGAAHAG) and 709–725 (VSSA…PSET). Basic and acidic residues predominate over residues 1149-1158 (VEEEVCESER).

This sequence belongs to the DNA polymerase type-B family.

The protein resides in the host nucleus. It catalyses the reaction DNA(n) + a 2'-deoxyribonucleoside 5'-triphosphate = DNA(n+1) + diphosphate. The protein is DNA polymerase catalytic subunit (DPOL) of Tupaia belangeri (Common tree shrew).